A 62-amino-acid polypeptide reads, in one-letter code: U10-hottentoxin-Hj2a (62 aa).

A signal peptide spans 1-22; it reads MQKLLIILILFCILKFNVDVEG. Cystine bridges form between Cys28-Cys46, Cys33-Cys59, and Cys37-Cys61.

Belongs to the short scorpion toxin superfamily. Potassium channel inhibitor family. Alpha-KTx 23 subfamily. In terms of tissue distribution, expressed by the venom gland.

The protein localises to the secreted. May block potassium channels. This Hottentotta judaicus (Black scorpion) protein is U10-hottentoxin-Hj2a.